Here is a 570-residue protein sequence, read N- to C-terminus: Putative diflavin flavoprotein A 5 (570 aa).

The tract at residues glutamate 38–histidine 231 is zinc metallo-hydrolase. Positions valine 260–lysine 402 constitute a Flavodoxin-like domain. The flavodoxin-reductase-like stretch occupies residues valine 421–tyrosine 570.

The protein in the N-terminal section; belongs to the zinc metallo-hydrolase group 3 family. This sequence in the C-terminal section; belongs to the flavodoxin reductase family. Requires Fe cation as cofactor.

Its function is as follows. Mediates electron transfer from NADH to oxygen, reducing it to water. This modular protein has 3 redox cofactors, in other organisms the same activity requires 2 or 3 proteins. The polypeptide is Putative diflavin flavoprotein A 5 (dfa5) (Nostoc sp. (strain PCC 7120 / SAG 25.82 / UTEX 2576)).